Here is a 270-residue protein sequence, read N- to C-terminus: MMLRLLSSLLLVAVASGYGPPSSHSSSRVVHGEDAVPYSWPWQVSLQYEKSGSFYHTCGGSLIAPDWVVTAGHCISRDLTYQVVLGEYNLAVKEGPEQVIPINSEELFVHPLWNRSCVACGNDIALIKLSRSAQLGDAVQLASLPPAGDILPNKTPCYITGWGRLYTNGPLPDKLQQARLPVVDYKHCSRWNWWGSTVKKTMVCAGGYIRSGCNGDSGGPLNCPTEDGGWQVHGVTSFVSAFGCNFIWKPTVFTRVSAFIDWIEETIASH.

Positions 1–15 (MMLRLLSSLLLVAVA) form a signal peptide, or 16. Positions 16–28 (SGYGPPSSHSSSR) are cleaved as a propeptide — activation peptide. The Peptidase S1 domain occupies 29–268 (VVHGEDAVPY…FIDWIEETIA (240 aa)). A disulfide bridge connects residues C58 and C74. The active-site Charge relay system is the H73. N-linked (GlcNAc...) asparagine glycosylation is present at N114. An intrachain disulfide couples C117 to C120. D123 acts as the Charge relay system in catalysis. Disulfide bonds link C157–C223, C188–C204, and C213–C244. The active-site Charge relay system is the S217.

Belongs to the peptidase S1 family. Elastase subfamily.

The enzyme catalyses Preferential cleavage: Ala-|-Xaa. Does not hydrolyze elastin.. Its function is as follows. Efficient protease with alanine specificity but only little elastolytic activity. This is Chymotrypsin-like elastase family member 3A (CELA3A) from Homo sapiens (Human).